Reading from the N-terminus, the 327-residue chain is Voltage-dependent calcium channel gamma-4 subunit (327 aa).

At 1–9 the chain is on the cytoplasmic side; the sequence is MVRCDRGLQ. Residues 10-30 form a helical membrane-spanning segment; the sequence is MLLTTAGAFAAFSLMAIAIGT. Residues 31-107 are Extracellular-facing; sequence DYWLYSSAHI…EYLLRIVRAS (77 aa). 2 N-linked (GlcNAc...) asparagine glycosylation sites follow: N42 and N45. A helical membrane pass occupies residues 108–128; sequence SVFPILSTILLLLGGLCIGAG. Residues 129-136 are Cytoplasmic-facing; the sequence is RIYSRKNN. A helical transmembrane segment spans residues 137-157; it reads IVLSAGILFVAAGLSNIIGII. At 158 to 186 the chain is on the extracellular side; that stretch reads VYISSNTGDPSDKRDEDKKNHYNYGWSFY. Residues 187–207 form a helical membrane-spanning segment; it reads FGALSFIVAETVGVLAVNIYI. At 208–327 the chain is on the cytoplasmic side; it reads EKNKELRFKT…SMLNRRTTPV (120 aa). The interval 235-261 is disordered; sequence SYRYRRRRSRSSSRSTEASPSRDVSPM. Residues 246–256 are compositionally biased toward low complexity; it reads SSRSTEASPSR. S259 is subject to Phosphoserine.

It belongs to the PMP-22/EMP/MP20 family. CACNG subfamily. In terms of assembly, interacts with CACNA1C. Identified in a complex with the L-type calcium channel subunits CACNA1C, CACNA2D1 and either CACNB1 or CACNB2. Acts as an auxiliary subunit for AMPA-selective glutamate receptors (AMPARs). Interacts with GRIA1. Detected in heart left ventricle.

The protein resides in the cell membrane. In terms of biological role, regulates the activity of L-type calcium channels that contain CACNA1C as pore-forming subunit. Regulates the trafficking and gating properties of AMPA-selective glutamate receptors (AMPARs), including GRIA1 and GRIA4. Promotes their targeting to the cell membrane and synapses and modulates their gating properties by slowing their rates of activation, deactivation and desensitization and by mediating their resensitization. This Homo sapiens (Human) protein is Voltage-dependent calcium channel gamma-4 subunit (CACNG4).